The sequence spans 111 residues: uncharacterized protein (111 aa).

A helical membrane pass occupies residues 64–86 (VLCWLVLPLYCCNLLNLFFNIFL).

Its subcellular location is the membrane. This is an uncharacterized protein from Saccharomyces cerevisiae (strain ATCC 204508 / S288c) (Baker's yeast).